Reading from the N-terminus, the 650-residue chain is AP-1-like transcription factor YAP1 (650 aa).

The tract at residues 1–89 (MSVSTAKRSL…AFRERKERKM (89 aa)) is disordered. Phosphoserine is present on residues serine 9, serine 14, and serine 17. Composition is skewed to basic and acidic residues over residues 22–50 (EGSK…EQPK), 58–68 (KKQDLDPETKQ), and 80–89 (AFRERKERKM). 2 consecutive short sequence motifs (bipartite nuclear localization signal) follow at residues 35 to 42 (HRRTGTRD) and 68 to 75 (QKRTAQNR). In terms of domain architecture, bZIP spans 64-127 (PETKQKRTAQ…ITLVNELKKY (64 aa)). The basic motif stretch occupies residues 67–90 (KQKRTAQNRAAQRAFRERKERKMK). The segment at 92–120 (LEKKVQSLESIQQQNEVEATFLRDQLITL) is leucine-zipper. Disordered regions lie at residues 149–169 (HFSK…PNDD) and 183–251 (QYPL…PNSS). Residues 150–162 (FSKNNVNHSNSEP) are compositionally biased toward polar residues. A Phosphothreonine modification is found at threonine 165. Positions 195–209 (SKNVGKQLPSPNDPS) are enriched in polar residues. The residue at position 204 (serine 204) is a Phosphoserine. The tract at residues 220 to 378 (QKKLSDATDS…YENSFSGFGR (159 aa)) is transcription activation 1. Over residues 226 to 246 (ATDSSSATLDSLSNSNDVLNN) the composition is skewed to low complexity. Residues 303–315 (CSKMNQVCGTRQC) are n-CRD. Disulfide bonds link cysteine 303–cysteine 598, cysteine 310–cysteine 629, cysteine 598–cysteine 620, cysteine 598–cysteine 629, and cysteine 620–cysteine 629. Serine 372 is modified (phosphoserine). Residues 392–414 (DNSTGSTDSTGSTGNKNKKNNNN) are compositionally biased toward low complexity. 3 disordered regions span residues 392–419 (DNST…DDVL), 510–532 (LFGE…DDES), and 551–591 (LQSV…VPSK). The segment at 430–537 (NQVTNFFSPG…SDDESSLIKN (108 aa)) is transcription activation 2. Serine 528 carries the phosphoserine modification. The segment covering 551-570 (LQSVPGNESEISQKNGSSLQ) has biased composition (polar residues). Over residues 571 to 580 (NADKINNGND) the composition is skewed to low complexity. The segment at 598–629 (CSEIWDRITTHPKYSDIDVDGLCSELMAKAKC) is c-CRD. Residues 614–621 (IDVDGLCS) carry the Nuclear export signal motif.

Belongs to the bZIP family. YAP subfamily. In terms of assembly, interacts independent of oxidation state in the cytoplasm with the karyopherin PSE1/KAP121 (and less strongly with KAP123). The reduced form of YAP1 interacts in the nucleus with the nuclear export protein CRM1, and in the cytoplasm with YBP1 and the peroxiredoxin HYR1/GPX3/ORP1. Interacts with RBG1. Depending on the oxidative stress inducing agent, YAP1 can undergo two distinct conformational changes, both involving disulfide bond formation, and both masking the nuclear export signal, thus abolishing nuclear export by CRM1/exportin 1. The disulfide stress-inducing agent diamide leads to the formation of one of three possible disulfide bonds in the c-CRD. Peroxide stress induces the formation of the HYR1/GPX3- and YBP1-dependent interdomain disulfide bond between Cys-303 and Cys-598 (causing nuclear localization of YAP1), and the possibly stabilizing bond between Cys-310 and Cys-629 (required for full activity of YAP1).

The protein localises to the nucleus. It is found in the cytoplasm. Its function is as follows. Transcription activator involved in oxidative stress response and redox homeostasis. Regulates the transcription of genes encoding antioxidant enzymes and components of the cellular thiol-reducing pathways, including the thioredoxin system (TRX2, TRR1), the glutaredoxin system (GSH1, GLR1), superoxide dismutase (SOD1, SOD2), glutathione peroxidase (GPX2), and thiol-specific peroxidases (TSA1, AHP1). The induction of some of these genes requires the cooperative action of both, YAP1 and SKN7. Preferentially binds to promoters with the core binding site 5'-TTA[CG]TAA-3'. Activity of the transcription factor is controlled through oxidation of specific cysteine residues resulting in the alteration of its subcellular location. Oxidative stress (as well as carbon stress, but not increased temperature, acidic pH, or ionic stress) induces nuclear accumulation and as a result YAP1 transcriptional activity. Activation by hydrogen peroxide or thiol-reactive chemicals elicit distinct adaptive gene responses. Nuclear export is restored when disulfide bonds are reduced by thioredoxin (TRX2), whose expression is controlled by YAP1, providing a mechanism for negative autoregulation. When overexpressed, YAP1 confers pleiotropic drug-resistance and increases cellular tolerance to cadmium, iron chelators and zinc. This is AP-1-like transcription factor YAP1 from Saccharomyces cerevisiae (strain ATCC 204508 / S288c) (Baker's yeast).